The following is an 87-amino-acid chain: Small ribosomal subunit protein bS20 (87 aa).

The segment covering 1 to 10 has biased composition (basic residues); sequence MANIKSKQKR. The disordered stretch occupies residues 1-27; the sequence is MANIKSKQKRILTNEKSRQRNKSVRSA.

Belongs to the bacterial ribosomal protein bS20 family.

Functionally, binds directly to 16S ribosomal RNA. The protein is Small ribosomal subunit protein bS20 of Corynebacterium aurimucosum (strain ATCC 700975 / DSM 44827 / CIP 107346 / CN-1) (Corynebacterium nigricans).